We begin with the raw amino-acid sequence, 108 residues long: Succinate dehydrogenase assembly factor 4, mitochondrial (108 aa).

Residues 33 to 46 (NNNNNNNNNNNNNN) are compositionally biased toward low complexity. Disordered stretches follow at residues 33–59 (NNNNNNNNNNNNNNISNKKAEMSKENQ) and 79–108 (NPITKEIGGPKGPEPTRYNDWERNGRVSDF). Basic and acidic residues predominate over residues 95-108 (RYNDWERNGRVSDF).

This sequence belongs to the SDHAF4 family. Interacts with SdhA in its FAD-bound form.

The protein resides in the mitochondrion matrix. In terms of biological role, plays an essential role in the assembly of succinate dehydrogenase (SDH), an enzyme complex (also referred to as respiratory complex II) that is a component of both the tricarboxylic acid (TCA) cycle and the mitochondrial electron transport chain, and which couples the oxidation of succinate to fumarate with the reduction of ubiquinone (coenzyme Q) to ubiquinol. Binds to the flavoprotein subunit SdhA in its FAD-bound form, blocking the generation of excess reactive oxygen species (ROS) and facilitating its assembly with the iron-sulfur protein subunit SdhB into the SDH catalytic dimer. The chain is Succinate dehydrogenase assembly factor 4, mitochondrial from Dictyostelium discoideum (Social amoeba).